The sequence spans 58 residues: UPF0391 membrane protein Shew185_1413 (58 aa).

Helical transmembrane passes span 6 to 26 (LVFL…IAGA) and 28 to 48 (AGIA…SLLI).

This sequence belongs to the UPF0391 family.

Its subcellular location is the cell membrane. In Shewanella baltica (strain OS185), this protein is UPF0391 membrane protein Shew185_1413.